Here is a 1150-residue protein sequence, read N- to C-terminus: Pesticidal crystal protein Cry9Ea (1150 aa).

Belongs to the delta endotoxin family.

Functionally, promotes colloidosmotic lysis by binding to the midgut epithelial cells of insects. The protein is Pesticidal crystal protein Cry9Ea (cry9Ea) of Bacillus thuringiensis subsp. aizawai.